A 463-amino-acid chain; its full sequence is Chaperone SurA (463 aa).

Residues 1 to 25 (MTKPFSVVLASLLAITSTISPLASA) form the signal peptide. PpiC domains follow at residues 174 to 276 (GSKY…KLME) and 289 to 388 (VTEY…QRVG). Disordered regions lie at residues 329 to 348 (ATAK…GDLG) and 434 to 463 (GDRA…KPTR). A compositionally biased stretch (low complexity) spans 439 to 452 (NNATAAPAKSADPA). A compositionally biased stretch (pro residues) spans 453–463 (LPAPPPAKPTR).

It is found in the periplasm. The enzyme catalyses [protein]-peptidylproline (omega=180) = [protein]-peptidylproline (omega=0). In terms of biological role, chaperone involved in the correct folding and assembly of outer membrane proteins. Recognizes specific patterns of aromatic residues and the orientation of their side chains, which are found more frequently in integral outer membrane proteins. May act in both early periplasmic and late outer membrane-associated steps of protein maturation. The chain is Chaperone SurA from Xanthomonas oryzae pv. oryzae (strain MAFF 311018).